Here is a 367-residue protein sequence, read N- to C-terminus: MAFSTNGSEEIELYHAQIHLYKHVYNFVSSMALKSAMELGIADVIHNHGKPITLPELASALKLHPSKVGILYRFLRLLTHNGFFAKTTVPSQNGKDGEEEEETAYALTPPSKLLVKGKPTCLASIVRGALHPSSLDMWRSSEKWFKEDKELTLFESATGESFWDFLNKDSESGTLSMFQEAMAADSQMFKLALKECRHVFEGLESLVDVGGGTGGVTKLIHEEFPHLKCTVFDQPQVVGNLSGNENLKFVGGDMFKSIPPADAVLLKWVLHDWNDELSLKILKNSKEAISGKGKEGKVIIIDISIDEASGDRELTELQLDYDLVMLTMFNGKEREKKEWEKLISDAGFSSYKITPICGFKSLIEVFP.

S-adenosyl-L-methionine is bound by residues 209-212 (VGGG), Asp233, 233-234 (DQ), 253-254 (DM), and Lys267. The active-site Proton acceptor is the His271.

This sequence belongs to the class I-like SAM-binding methyltransferase superfamily. Cation-independent O-methyltransferase family. COMT subfamily.

The catalysed reaction is a 4'-hydroxyisoflavone + S-adenosyl-L-methionine = a 4'-methoxyisoflavone + S-adenosyl-L-homocysteine + H(+). The enzyme catalyses (2R,3S)-2,4',7-trihydroxyisoflavanone + S-adenosyl-L-methionine = (2R,3S)-2,7-dihydroxy-4'-methoxyisoflavanone + S-adenosyl-L-homocysteine + H(+). 2-hydroxyisoflavanone 4'-O-methyltransferase involved in the biosynthesis of formononetin. Can use 2,7,4'-trihydroxyisoflavanone, (+)-6a-hydroxymaackiain or medicarpin as substrate, but not daidzein or (-)-6a-hydroxymaackiain. This Glycyrrhiza echinata (Licorice) protein is Isoflavone 4'-O-methyltransferase (HI4'OMT).